The chain runs to 363 residues: 3,4-dihydroxy-2-butanone 4-phosphate synthase (363 aa).

Residues 1 to 202 (MSHISPIPEI…ITDLIEYRSR (202 aa)) are DHBP synthase. D-ribulose 5-phosphate contacts are provided by residues 28 to 29 (RE), aspartate 33, 141 to 145 (RAGHT), and glutamate 165. Position 29 (glutamate 29) interacts with Mg(2+). Residue histidine 144 participates in Mg(2+) binding. The interval 205 to 363 (SLLEDMGNAP…EVVGFEEAEK (159 aa)) is GTP cyclohydrolase II-like.

In the N-terminal section; belongs to the DHBP synthase family. The protein in the C-terminal section; belongs to the GTP cyclohydrolase II family. Requires Mg(2+) as cofactor. The cofactor is Mn(2+).

It carries out the reaction D-ribulose 5-phosphate = (2S)-2-hydroxy-3-oxobutyl phosphate + formate + H(+). The protein operates within cofactor biosynthesis; riboflavin biosynthesis; 2-hydroxy-3-oxobutyl phosphate from D-ribulose 5-phosphate: step 1/1. In terms of biological role, catalyzes the conversion of D-ribulose 5-phosphate to formate and 3,4-dihydroxy-2-butanone 4-phosphate. This chain is 3,4-dihydroxy-2-butanone 4-phosphate synthase (ribB), found in Neisseria meningitidis serogroup A / serotype 4A (strain DSM 15465 / Z2491).